Here is a 355-residue protein sequence, read N- to C-terminus: Receptor-like serine/threonine-protein kinase At1g78530 (355 aa).

Residues Met1 to Thr8 lie on the Extracellular side of the membrane. A helical membrane pass occupies residues Phe9 to Phe29. At Tyr30–Phe355 the chain is on the cytoplasmic side. Positions Leu75–Ile347 constitute a Protein kinase domain. ATP-binding positions include Leu81–Val89 and Lys103. Tyr148 is modified (phosphotyrosine). Asp197 acts as the Proton acceptor in catalysis. 2 positions are modified to phosphoserine: Ser201 and Ser230. Thr231 and Thr236 each carry phosphothreonine. Tyr244 carries the phosphotyrosine modification.

It belongs to the protein kinase superfamily. Ser/Thr protein kinase family.

It localises to the cell membrane. It catalyses the reaction L-seryl-[protein] + ATP = O-phospho-L-seryl-[protein] + ADP + H(+). It carries out the reaction L-threonyl-[protein] + ATP = O-phospho-L-threonyl-[protein] + ADP + H(+). This Arabidopsis thaliana (Mouse-ear cress) protein is Receptor-like serine/threonine-protein kinase At1g78530.